We begin with the raw amino-acid sequence, 605 residues long: Isocitrate dehydrogenase kinase/phosphatase (605 aa).

Residues 327–333 and Lys348 contribute to the ATP site; that span reads APGIKGL. The active site involves Asp383.

This sequence belongs to the AceK family.

Its subcellular location is the cytoplasm. The catalysed reaction is L-seryl-[isocitrate dehydrogenase] + ATP = O-phospho-L-seryl-[isocitrate dehydrogenase] + ADP + H(+). Its function is as follows. Bifunctional enzyme which can phosphorylate or dephosphorylate isocitrate dehydrogenase (IDH) on a specific serine residue. This is a regulatory mechanism which enables bacteria to bypass the Krebs cycle via the glyoxylate shunt in response to the source of carbon. When bacteria are grown on glucose, IDH is fully active and unphosphorylated, but when grown on acetate or ethanol, the activity of IDH declines drastically concomitant with its phosphorylation. In Burkholderia multivorans (strain ATCC 17616 / 249), this protein is Isocitrate dehydrogenase kinase/phosphatase.